The chain runs to 575 residues: Interleukin-1 receptor-like 2 (575 aa).

A signal peptide spans methionine 1–alanine 19. Ig-like C2-type domains lie at aspartate 20–threonine 111, proline 126–glycine 211, and tyrosine 222–alanine 318. The Extracellular portion of the chain corresponds to aspartate 20–arginine 335. N-linked (GlcNAc...) asparagine glycosylation is found at asparagine 41, asparagine 59, asparagine 109, asparagine 127, asparagine 184, asparagine 234, asparagine 250, asparagine 266, and asparagine 299. A disulfide bridge connects residues cysteine 42 and cysteine 95. Residues cysteine 146 and cysteine 195 are joined by a disulfide bond. An intrachain disulfide couples cysteine 249 to cysteine 316. A helical transmembrane segment spans residues alanine 336 to tyrosine 356. The Cytoplasmic segment spans residues asparagine 357 to glycine 575. Positions lysine 381 to methionine 536 constitute a TIR domain. The active site involves glutamate 467.

This sequence belongs to the interleukin-1 receptor family. In terms of assembly, interacts with IL1RAP; the association is enhanced by IL36B indicative for an functional signaling complex and inhibited by IL36RN. Expressed in synovial fibroblasts and articular chondrocytes. Expressed in keratinocytes and monocyte-derived dendritic cells. Expressed in monocytes and myeloid dendritic cells; at protein level.

The protein localises to the membrane. It carries out the reaction NAD(+) + H2O = ADP-D-ribose + nicotinamide + H(+). Functionally, receptor for interleukin-36 (IL36A, IL36B and IL36G). After binding to interleukin-36 associates with the coreceptor IL1RAP to form the interleukin-36 receptor complex which mediates interleukin-36-dependent activation of NF-kappa-B, MAPK and other pathways. The IL-36 signaling system is thought to be present in epithelial barriers and to take part in local inflammatory response; it is similar to the IL-1 system. Seems to be involved in skin inflammatory response by induction of the IL-23/IL-17/IL-22 pathway. This chain is Interleukin-1 receptor-like 2 (IL1RL2), found in Homo sapiens (Human).